The chain runs to 294 residues: Metallophosphoesterase MPPED2 (294 aa).

Asp65, His67, Asp86, Asn117, and His213 together coordinate Mn(2+). 117 to 118 provides a ligand contact to GMP; that stretch reads NH. Residues 225 to 226 and 252 to 255 contribute to the GMP site; these read KE and GIHE. His254 serves as a coordination point for Mn(2+).

It belongs to the UPF0046 family. Homodimer. Mn(2+) serves as cofactor. Requires Co(2+) as cofactor.

With respect to regulation, inhibited by nmolar levels of AMP and GMP. Displays low metallophosphoesterase activity (in vitro). May play a role in the development of the nervous system. In Mus musculus (Mouse), this protein is Metallophosphoesterase MPPED2 (Mpped2).